The primary structure comprises 56 residues: Putative zinc-binding protein YnfU (56 aa).

Residues C19, C22, C41, and C44 each contribute to the Zn(2+) site.

Zn(2+) is required as a cofactor.

This is Putative zinc-binding protein YnfU from Escherichia coli (strain K12).